Consider the following 555-residue polypeptide: Protein PLASTID TRANSCRIPTIONALLY ACTIVE 12, chloroplastic (555 aa).

The transit peptide at 1–58 directs the protein to the chloroplast; that stretch reads MASCYNPWRLFPGMSTAVPAGPVTAPAHSRTCKSSKVFSALPHRRGLLFLGTRRARIK. Disordered stretches follow at residues 80 to 100, 115 to 167, and 468 to 541; these read YFDS…SIPG, ARAP…EPDV, and SYNE…IDDS. The span at 144–154 shows a compositional bias: polar residues; that stretch reads QVTSASGTEGA. Composition is skewed to acidic residues over residues 471–480 and 490–502; these read EDSDDEDEDV and LEDE…DVAE. Residues 508 to 519 are compositionally biased toward polar residues; the sequence is NQNWSALKSTGQ. Positions 521–538 are enriched in basic and acidic residues; it reads EKPKEKSKKDEMTLKEAI.

As to quaternary structure, component of the plastid-encoded plastid RNA polymerase (PEP) complex.

It localises to the plastid. The protein resides in the chloroplast stroma. The protein localises to the nucleus. Functionally, required for the activity of the plastid-encoded RNA polymerase (PEP) and full expression of genes transcribed by PEP. Required for the proper build-up and formation of the PEP-complex. Binds single-stranded (ss) DNA and RNA, but not double-stranded (ds) DNA. The protein is Protein PLASTID TRANSCRIPTIONALLY ACTIVE 12, chloroplastic of Zea mays (Maize).